The primary structure comprises 91 residues: Small ribosomal subunit protein uS19 (91 aa).

The protein belongs to the universal ribosomal protein uS19 family.

Protein S19 forms a complex with S13 that binds strongly to the 16S ribosomal RNA. In Aliarcobacter butzleri (strain RM4018) (Arcobacter butzleri), this protein is Small ribosomal subunit protein uS19.